A 158-amino-acid chain; its full sequence is NAD(P)H-quinone oxidoreductase subunit N (158 aa).

This sequence belongs to the complex I NdhN subunit family. NDH-1 can be composed of about 15 different subunits; different subcomplexes with different compositions have been identified which probably have different functions.

The protein localises to the cellular thylakoid membrane. It catalyses the reaction a plastoquinone + NADH + (n+1) H(+)(in) = a plastoquinol + NAD(+) + n H(+)(out). The catalysed reaction is a plastoquinone + NADPH + (n+1) H(+)(in) = a plastoquinol + NADP(+) + n H(+)(out). NDH-1 shuttles electrons from an unknown electron donor, via FMN and iron-sulfur (Fe-S) centers, to quinones in the respiratory and/or the photosynthetic chain. The immediate electron acceptor for the enzyme in this species is believed to be plastoquinone. Couples the redox reaction to proton translocation, and thus conserves the redox energy in a proton gradient. Cyanobacterial NDH-1 also plays a role in inorganic carbon-concentration. This is NAD(P)H-quinone oxidoreductase subunit N from Nostoc punctiforme (strain ATCC 29133 / PCC 73102).